The primary structure comprises 60 residues: Large ribosomal subunit protein uL30 (60 aa).

It belongs to the universal ribosomal protein uL30 family. As to quaternary structure, part of the 50S ribosomal subunit.

The chain is Large ribosomal subunit protein uL30 from Polaromonas sp. (strain JS666 / ATCC BAA-500).